Reading from the N-terminus, the 251-residue chain is Derlin-1 (251 aa).

An N-acetylserine modification is found at Ser-2. Residues 2 to 15 (SDIGDWFRSIPTIT) lie on the Cytoplasmic side of the membrane. A helical transmembrane segment spans residues 16-31 (RYWFAATVAVPLVGKL). The Lumenal portion of the chain corresponds to 32 to 69 (GLISPAYFFLWPEAFLYRFQIWRPITATFYFPVGPGTG). The chain crosses the membrane as a helical span at residues 70-89 (FLYLVNLYFLYQYSTRLETG). Residues 90-94 (AFDGR) lie on the Cytoplasmic side of the membrane. Residues 95 to 115 (PADYLFMLLFNWICIVITGLA) traverse the membrane as a helical segment. Over 116 to 122 (MDMQLLM) the chain is Lumenal. Residues 123-137 (IPLIMSVLYVWAQLN) form a helical membrane-spanning segment. At 138–154 (RDMIVSFWFGTRFKACY) the chain is on the cytoplasmic side. The helical transmembrane segment at 155–166 (LPWVILGFNYII) threads the bilayer. At 167-170 (GGSV) the chain is on the lumenal side. A helical transmembrane segment spans residues 171–189 (INELIGNLVGHLYFFLMFR). Residues 190 to 251 (YPMDLGGRNF…WGQGFRLGDQ (62 aa)) lie on the Cytoplasmic side of the membrane. Ser-201 carries the phosphoserine modification. Thr-202 carries the post-translational modification Phosphothreonine. Ser-226 carries the phosphoserine modification. Residues 229–251 (RAADQNGGGGRHNWGQGFRLGDQ) are disordered. The SHP-box signature appears at 241 to 248 (NWGQGFRL).

This sequence belongs to the derlin family. In terms of assembly, homotetramer. The four subunits of the tetramer are arranged in a twofold symmetry. Forms homo- and heterooligomers with DERL2 and DERL3; binding to DERL3 is poorer than that between DERL2 and DERL3. Interacts (via SHP-box motif) with VCP. Interacts with AMFR, SELENOS, SEL1L, SELENOK and SYVN1, as well as with SEL1L-SYVN1 and VCP-SELENOS protein complexes; this interaction is weaker than that observed between DERL2 and these complexes. Interacts with NGLY1 and YOD1. Does not bind to EDEM1. Interacts with DNAJB9. Interacts with RNF103. Interacts with HM13. Interacts with XBP1 isoform 1 (via luminal/ectodomain domain); the interaction obviates the need for ectodomain shedding prior HM13/SPP-mediated XBP1 isoform 1 cleavage. Interacts with the signal recognition particle/SRP and the SRP receptor; in the process of endoplasmic reticulum stress-induced pre-emptive quality control. May interact with UBXN6. Interacts with ZFAND2B; probably through VCP. Interacts with CCDC47. Interacts with C18orf32. May interact with TRAM1. Forms a complex with SVIP and VCP/p97.

Its subcellular location is the endoplasmic reticulum membrane. In terms of biological role, functional component of endoplasmic reticulum-associated degradation (ERAD) for misfolded lumenal proteins. Forms homotetramers which encircle a large channel traversing the endoplasmic reticulum (ER) membrane. This allows the retrotranslocation of misfolded proteins from the ER into the cytosol where they are ubiquitinated and degraded by the proteasome. The channel has a lateral gate within the membrane which provides direct access to membrane proteins with no need to reenter the ER lumen first. May mediate the interaction between VCP and the misfolded protein. Also involved in endoplasmic reticulum stress-induced pre-emptive quality control, a mechanism that selectively attenuates the translocation of newly synthesized proteins into the endoplasmic reticulum and reroutes them to the cytosol for proteasomal degradation. By controlling the steady-state expression of the IGF1R receptor, indirectly regulates the insulin-like growth factor receptor signaling pathway. The chain is Derlin-1 from Bos taurus (Bovine).